A 287-amino-acid chain; its full sequence is Protease HtpX homolog (287 aa).

Helical transmembrane passes span 5–25 (IRTGLLMAALTALFVAIGYWI) and 28–48 (GAGAAIALAFAAAGNFVAYWV). His-131 contributes to the Zn(2+) binding site. Residue Glu-132 is part of the active site. Residue His-135 coordinates Zn(2+). 2 consecutive transmembrane segments (helical) span residues 146-166 (VTATLAGAIGMISNLAIFFGG) and 174-194 (PFAGIAGLLLLLLAPLTATLV). Glu-203 contacts Zn(2+).

It belongs to the peptidase M48B family. Zn(2+) serves as cofactor.

The protein localises to the cell inner membrane. The protein is Protease HtpX homolog of Acidiphilium cryptum (strain JF-5).